Here is a 150-residue protein sequence, read N- to C-terminus: MASNVFSEIILFVSVLIITAAVSGILATSTHKISLGLEQRGDALSSQLTKDFEIINDPGYVLKNATDTTMIYLKNTGKSPITFDKEVISVLVDGNPVEISNTYVEGDSSVRVLGSSKVGKLHITYNTSGYHRFKVVTSEGIARTFTGEIV.

A helical membrane pass occupies residues 9–29 (IILFVSVLIITAAVSGILATS).

The protein belongs to the archaeal FlaG family.

It localises to the cell membrane. Its subcellular location is the archaeal flagellum. In Methanococcus voltae, this protein is Putative flagella-related protein G (flaG).